A 509-amino-acid chain; its full sequence is Poly(A) RNA polymerase GLD2-A (509 aa).

Positions 88-107 (PGSPSSSFQNRKRRSDEGNV) are disordered. Mg(2+) contacts are provided by D240 and D242. The PAP-associated domain occupies 409-462 (LGDLLLGFLKYFAVEFDWSKDIISVREGKALPRSDDYLWRNKYICVEEPFDGTN).

This sequence belongs to the DNA polymerase type-B-like family. GLD2 subfamily. In terms of assembly, component of a complex at least composed of cpeb1, cpsf1, tent2/gld2, pabpc1/ePAB, parn and sympk. Following oocyte maturation, parn is expelled from the complex. Interacts with rbfox2 and sympk. Mg(2+) serves as cofactor. Mn(2+) is required as a cofactor.

The protein localises to the cytoplasm. It catalyses the reaction RNA(n) + ATP = RNA(n)-3'-adenine ribonucleotide + diphosphate. Its function is as follows. Cytoplasmic poly(A) RNA polymerase that adds successive AMP monomers to the 3'-end of specific RNAs, forming a poly(A) tail. In contrast to the canonical nuclear poly(A) RNA polymerase, it only adds poly(A) to selected cytoplasmic mRNAs during oocyte maturation. Plays a central role during oocyte maturation by mediating polyadenylation of dormant mRNAs, which contain 5'AAUAAA-3' sequence in their 3'UTR. In immature oocytes, polyadenylation of poly(A) tails is counteracted by the ribonuclease parn. During maturation parn is excluded from the ribonucleoprotein complex, allowing poly(A) elongation and activation of mRNAs. May not play a role in replication-dependent histone mRNA degradation. The protein is Poly(A) RNA polymerase GLD2-A (tent2-a) of Xenopus laevis (African clawed frog).